A 2210-amino-acid chain; its full sequence is RNA-directed RNA polymerase L (2210 aa).

Residues 26-284 form an endonuclease region; sequence RDIFLSQHHP…SHKDSDVPSC (259 aa). Positions 51, 89, and 102 each coordinate Mn(2+). Residue lysine 115 is part of the active site. A RdRp catalytic domain is found at 1171–1368; the sequence is CDMKMAVNNG…FLSSKLNKFI (198 aa). Aspartate 1329 contributes to the Mg(2+) binding site.

The protein belongs to the Bunyavirales RNA polymerase family. In terms of assembly, homomultimer; the oligomeric structure is essential for the polymerase activity. Interacts with nucleoprotein N. Interacts with protein Z; this interaction inhibits viral transcription and replication, Z partially blocks the product exit tunnel for the releasing nascent RNA product. Mn(2+) serves as cofactor. Mg(2+) is required as a cofactor.

The protein localises to the virion. The protein resides in the host cytoplasm. It catalyses the reaction RNA(n) + a ribonucleoside 5'-triphosphate = RNA(n+1) + diphosphate. Its function is as follows. RNA-dependent RNA polymerase, which is responsible for the replication and transcription of the viral RNA genome using antigenomic RNA as an intermediate. During transcription, synthesizes subgenomic RNAs and assures their capping by a cap-snatching mechanism, which involves the endonuclease activity cleaving the host capped pre-mRNAs. These short capped RNAs are then used as primers for viral transcription. The 3'-end of subgenomic mRNAs molecules are heterogeneous and not polyadenylated. The replicase function is to direct synthesis of antigenomic and genomic RNA which are encapsidated and non capped. As a consequence of the use of the same enzyme for both transcription and replication, these mechanisms need to be well coordinated. These processes may be regulated by proteins N and Z in a dose-dependent manner. Z protein inhibits the viral polymerase L und thus the viral transcription and RNA synthesis. The polypeptide is RNA-directed RNA polymerase L (Junin mammarenavirus (JUNV)).